An 86-amino-acid polypeptide reads, in one-letter code: Acyl-CoA-binding protein homolog 1 (86 aa).

In terms of domain architecture, ACB spans 1-86; sequence MTLSFDDAAA…VEELIAKYGA (86 aa). An acyl-CoA-binding positions include lysine 13, 28-32, lysine 50, lysine 54, and tyrosine 73; that span reads YALFK.

It belongs to the ACBP family.

Functionally, binds medium- and long-chain acyl-CoA esters with very high affinity and may function as an intracellular carrier of acyl-CoA esters. The polypeptide is Acyl-CoA-binding protein homolog 1 (acbp-1) (Caenorhabditis elegans).